We begin with the raw amino-acid sequence, 1051 residues long: Integrin alpha-3 (1051 aa).

A signal peptide spans 1–32; the sequence is MGPGPRCAPGDPGWMLGALALMVAASGRFAFA. Over 33 to 991 the chain is Extracellular; the sequence is FNLDTRFLVV…LVEELPAEIE (959 aa). FG-GAP repeat units follow at residues 38–103, 110–171, 185–235, 236–292, 293–354, 356–411, and 415–477; these read RFLV…KDDC, EKSD…DLQL, CNSN…WDLS, EYSY…GGDL, KRKQ…TSFP, QPSL…GLLR, and QIVH…VARP. The N-linked (GlcNAc...) asparagine glycan is linked to Asn86. Disulfide bonds link Cys94-Cys103, Cys140-Cys162, and Cys185-Cys197. Residues Asp315, Asn317, Asp319, Asp323, Asp378, Asn380, Asp382, Asp386, Asp439, Asp441, Asn443, Tyr445, and Asp447 each coordinate Ca(2+). 2 cysteine pairs are disulfide-bonded: Cys485-Cys490 and Cys496-Cys550. Asn500, Asn511, Asn573, and Asn605 each carry an N-linked (GlcNAc...) asparagine glycan. Residues Cys615 and Cys621 are joined by a disulfide bond. 3 N-linked (GlcNAc...) asparagine glycosylation sites follow: Asn656, Asn697, and Asn841. A disulfide bridge links Cys694 with Cys702. 2 disulfide bridges follow: Cys846–Cys904 and Cys911–Cys916. The tract at residues 860–888 is disordered; sequence LSDPGDKPHSPQRRRRQLDPGGDQGSPPV. Asn923, Asn926, Asn935, and Asn969 each carry an N-linked (GlcNAc...) asparagine glycan. Residues 992–1019 form a helical membrane-spanning segment; the sequence is LWLVLVAVSAGLLLLGLIIILLWKCGFF. The GFFKR motif motif lies at 1017 to 1021; it reads GFFKR. Topologically, residues 1020–1051 are cytoplasmic; it reads KRARTRALYEAKRQKAEMKSQPSETERLTDDY.

It belongs to the integrin alpha chain family. As to quaternary structure, heterodimer of an alpha and a beta subunit. The alpha subunit is composed of a heavy and a light chain linked by a disulfide bond. Alpha-3 associates with beta-1. Interacts with HPS5. Interacts with FAP (seprase); the interaction occurs at the cell surface of invadopodia membrane in a collagen-dependent manner. Post-translationally, isoform 1, but not isoform 2, is phosphorylated on serine residues.

Its subcellular location is the cell membrane. It localises to the cell projection. The protein localises to the invadopodium membrane. It is found in the filopodium membrane. Its function is as follows. Integrin alpha-3/beta-1 is a receptor for fibronectin, laminin, collagen, epiligrin, thrombospondin and CSPG4. Integrin alpha-3/beta-1 provides a docking site for FAP (seprase) at invadopodia plasma membranes in a collagen-dependent manner and hence may participate in the adhesion, formation of invadopodia and matrix degradation processes, promoting cell invasion. Alpha-3/beta-1 may mediate with LGALS3 the stimulation by CSPG4 of endothelial cells migration. The sequence is that of Integrin alpha-3 (ITGA3) from Cricetulus griseus (Chinese hamster).